The following is a 184-amino-acid chain: Casparian strip membrane protein 3 (184 aa).

At 1-24 (MEGSEEHGETSKAPLSRGVSKGVS) the chain is on the cytoplasmic side. Residues 25 to 45 (ILDVILRFVAIIGTLASAIAM) form a helical membrane-spanning segment. Topologically, residues 46–72 (GTTNQTLPFFTQFIRFKAQYSDLPTLT) are extracellular. Asparagine 49 is a glycosylation site (N-linked (GlcNAc...) asparagine). The chain crosses the membrane as a helical span at residues 73–93 (FFVVANSIVSAYLILSLPLSI). Residues 94 to 105 (VHVIRSRAKYSR) lie on the Cytoplasmic side of the membrane. A helical membrane pass occupies residues 106-126 (LILIFFDAAMLALVTAGASAA). The Extracellular segment spans residues 127–159 (AAIVYLAHKGNARANWLAICQQFDSFCERISGS). The chain crosses the membrane as a helical span at residues 160–180 (LIGSFAAMVVLVLLIFLSAIA). Residues 181 to 184 (LARR) lie on the Cytoplasmic side of the membrane.

The protein belongs to the Casparian strip membrane proteins (CASP) family. Homodimer and heterodimers.

The protein localises to the cell membrane. Regulates membrane-cell wall junctions and localized cell wall deposition. Required for establishment of the Casparian strip membrane domain (CSD) and the subsequent formation of Casparian strips, a cell wall modification of the root endodermis that determines an apoplastic barrier between the intraorganismal apoplasm and the extraorganismal apoplasm and prevents lateral diffusion. This chain is Casparian strip membrane protein 3, found in Oryza sativa subsp. indica (Rice).